The primary structure comprises 124 residues: Large ribosomal subunit protein uL22 (124 aa).

The protein belongs to the universal ribosomal protein uL22 family. In terms of assembly, part of the 50S ribosomal subunit.

In terms of biological role, this protein binds specifically to 23S rRNA; its binding is stimulated by other ribosomal proteins, e.g. L4, L17, and L20. It is important during the early stages of 50S assembly. It makes multiple contacts with different domains of the 23S rRNA in the assembled 50S subunit and ribosome. The globular domain of the protein is located near the polypeptide exit tunnel on the outside of the subunit, while an extended beta-hairpin is found that lines the wall of the exit tunnel in the center of the 70S ribosome. The polypeptide is Large ribosomal subunit protein uL22 (Buchnera aphidicola subsp. Cinara cedri (strain Cc)).